The primary structure comprises 188 residues: Putative glutamine amidotransferase-like protein YvdE homolog (188 aa).

The 172-residue stretch at 17-188 (SPFWWNKVSY…IKDLGQGLQA (172 aa)) folds into the Glutamine amidotransferase type-1 domain.

In Lactococcus lactis subsp. cremoris (Streptococcus cremoris), this protein is Putative glutamine amidotransferase-like protein YvdE homolog.